Here is a 314-residue protein sequence, read N- to C-terminus: tRNA pseudouridine synthase B (314 aa).

D47 acts as the Nucleophile in catalysis.

This sequence belongs to the pseudouridine synthase TruB family. Type 1 subfamily.

It carries out the reaction uridine(55) in tRNA = pseudouridine(55) in tRNA. In terms of biological role, responsible for synthesis of pseudouridine from uracil-55 in the psi GC loop of transfer RNAs. The protein is tRNA pseudouridine synthase B of Vibrio campbellii (strain ATCC BAA-1116).